We begin with the raw amino-acid sequence, 500 residues long: MATIWFLSLLFLCCILLAAFKHKKRRTNQQQPPSPPGFPIIGNLHQLGELPHQSLWSLSKTYGPVMLLKLGSVPTVVVSSSETAKQVLKINDLHCCSRPSLAGAKELSYNYLDIAFSPFDDYWKELRRICVQELFSAKRVHSIQPIKEEEVRKLIVSATESASQKSPVNLSEKFLDLTVSVICKAAFSLDFHTSVLNNDGFDKLIHDAFLFLGSFSASNFFPNGGWIIDWLTGLQRRREKSVKDLDVFYQQMFDLHKQENKQGVEDFVDLLLKLEKEETVLGYGKLTRNHVKAILMNVLLGAINTSAMTMTWAMAELIRNPRVMKKVQSEIRNQMINKSVITLDDIDHLPYLKMVIKETWRLHPPVPLLLPREVMSEFEINGYKIQPKTLLYVNVWAIGRDPDSWKDADMFYPERFMDNNIDAKGQNFELLPFGSGRRICPGMYMGTTMVEFGLANMLYQFDWEVPDGMVVEDIDMEESPGLAVGKKNELLLVPVKYLGH.

A helical membrane pass occupies residues Met-1 to Lys-21. Cys-440 is a heme binding site.

It belongs to the cytochrome P450 family. The cofactor is heme.

The protein localises to the membrane. The chain is Cytochrome P450 71B9 (CYP71B9) from Arabidopsis thaliana (Mouse-ear cress).